A 147-amino-acid polypeptide reads, in one-letter code: Myosin-ID light chain (147 aa).

EF-hand domains lie at E8–N43, F79–R114, and L115–K147. Ca(2+) is bound by residues D21, N23, D25, K27, and E32.

In terms of assembly, myosin I is a dimer of a heavy and a light chain. Inability to self-assemble into filaments. Interacts with myoD. Does not interact with myoB or myoC.

The protein resides in the cytoplasm. Its function is as follows. Functions as the light chain for myosin-D. Has low affinity for calcium. In Dictyostelium discoideum (Social amoeba), this protein is Myosin-ID light chain (mlcD).